A 232-amino-acid polypeptide reads, in one-letter code: Ribonuclease 3 (232 aa).

Residues 5–134 (QTVLKNHFAI…FLGALLLDKD (130 aa)) form the RNase III domain. A Mg(2+)-binding site is contributed by glutamate 47. Residue aspartate 51 is part of the active site. The Mg(2+) site is built by aspartate 120 and glutamate 123. Glutamate 123 is a catalytic residue. One can recognise a DRBM domain in the interval 160–229 (DYKTHLQELL…AKNAVEKGLD (70 aa)).

It belongs to the ribonuclease III family. Homodimer. Requires Mg(2+) as cofactor.

Its subcellular location is the cytoplasm. It carries out the reaction Endonucleolytic cleavage to 5'-phosphomonoester.. In terms of biological role, digests double-stranded RNA. Involved in the processing of primary rRNA transcript to yield the immediate precursors to the large and small rRNAs (23S and 16S). Processes some mRNAs, and tRNAs when they are encoded in the rRNA operon. Processes pre-crRNA and tracrRNA of type II CRISPR loci if present in the organism. The sequence is that of Ribonuclease 3 from Streptococcus pneumoniae (strain CGSP14).